Consider the following 202-residue polypeptide: ATP-dependent Clp protease proteolytic subunit (202 aa).

Residue Ser-106 is the Nucleophile of the active site. The active site involves His-131.

Belongs to the peptidase S14 family. Fourteen ClpP subunits assemble into 2 heptameric rings which stack back to back to give a disk-like structure with a central cavity, resembling the structure of eukaryotic proteasomes.

It is found in the cytoplasm. It carries out the reaction Hydrolysis of proteins to small peptides in the presence of ATP and magnesium. alpha-casein is the usual test substrate. In the absence of ATP, only oligopeptides shorter than five residues are hydrolyzed (such as succinyl-Leu-Tyr-|-NHMec, and Leu-Tyr-Leu-|-Tyr-Trp, in which cleavage of the -Tyr-|-Leu- and -Tyr-|-Trp bonds also occurs).. Its function is as follows. Cleaves peptides in various proteins in a process that requires ATP hydrolysis. Has a chymotrypsin-like activity. Plays a major role in the degradation of misfolded proteins. The protein is ATP-dependent Clp protease proteolytic subunit of Albidiferax ferrireducens (strain ATCC BAA-621 / DSM 15236 / T118) (Rhodoferax ferrireducens).